The primary structure comprises 192 residues: uncharacterized protein (192 aa).

It is found in the virion. This is an uncharacterized protein from Acanthamoeba polyphaga mimivirus (APMV).